A 496-amino-acid polypeptide reads, in one-letter code: Probable E3 ubiquitin-protein ligase ARI12 (496 aa).

A TRIAD supradomain region spans residues 110-319; that stretch reads NEYFCGACGE…GDLHFCTFDA (210 aa). Residues Cys114, Cys117, Cys131, His133, Cys136, Cys139, Cys162, Cys172, Cys240, Cys243, His248, Cys253, Cys267, Cys270, Cys286, and Cys289 each contribute to the Zn(2+) site. The segment at 114-172 adopts an RING-type 1 zinc-finger fold; it reads CGACGESHPHKNLASVSCGHRICTRCWTSHINKIISEKPAAEWNLWLKCPVRVGLHASC. The segment at 191-253 adopts an IBR-type zinc-finger fold; it reads FNYNQYLLRS…REDAHSPVDC (63 aa). An RING-type 2; atypical zinc finger spans residues 267–297; the sequence is CPKCKLRIPRNQDNSLKMKCLPCNYVFCWFC.

The protein belongs to the RBR family. Ariadne subfamily. It depends on Zn(2+) as a cofactor. Preferentially expressed in roots.

The catalysed reaction is [E2 ubiquitin-conjugating enzyme]-S-ubiquitinyl-L-cysteine + [acceptor protein]-L-lysine = [E2 ubiquitin-conjugating enzyme]-L-cysteine + [acceptor protein]-N(6)-ubiquitinyl-L-lysine.. Its pathway is protein modification; protein ubiquitination. Might act as an E3 ubiquitin-protein ligase, or as part of E3 complex, which accepts ubiquitin from specific E2 ubiquitin-conjugating enzymes and then transfers it to substrates. The polypeptide is Probable E3 ubiquitin-protein ligase ARI12 (ARI12) (Arabidopsis thaliana (Mouse-ear cress)).